The chain runs to 489 residues: UBX domain-containing protein 7 (489 aa).

Ala2 is subject to N-acetylalanine. One can recognise a UBA domain in the interval 2–54 (AAHGGSAASSALKGLIQQFTTITGASESVGKHMLEACNNNLEMAVTMFLDGGG). The disordered stretch occupies residues 56-77 (AEEPSTSSASVSTVRPHTEEEV). Residues 59-70 (PSTSSASVSTVR) show a composition bias toward polar residues. A Glycyl lysine isopeptide (Lys-Gly) (interchain with G-Cter in SUMO2) cross-link involves residue Lys84. Lys99 participates in a covalent cross-link: Glycyl lysine isopeptide (Lys-Gly) (interchain with G-Cter in ubiquitin). Lys134 is covalently cross-linked (Glycyl lysine isopeptide (Lys-Gly) (interchain with G-Cter in SUMO2)). A phosphoserine mark is found at Ser278, Ser280, Ser285, and Ser288. Residues 285–304 (SEDSQLEAAIRASLQETHFD) form the UIM domain. The segment covering 300–309 (ETHFDSTQTK) has biased composition (polar residues). The tract at residues 300-384 (ETHFDSTQTK…PGTATNHQGL (85 aa)) is disordered. A Phosphothreonine modification is found at Thr306. Residues 352-366 (HKDLGHRKEENRRPL) show a composition bias toward basic and acidic residues. One can recognise a UBX domain in the interval 408 to 485 (VNGPKAQLML…GLCPQETVFV (78 aa)).

In terms of assembly, interacts with neddylated CUL2, ubiquitinated HIF1A, and VCP/p97.

Its subcellular location is the nucleus. Its function is as follows. Ubiquitin-binding adapter that links a subset of NEDD8-associated cullin ring ligases (CRLs) to the segregase VCP/p97, to regulate turnover of their ubiquitination substrates. This Homo sapiens (Human) protein is UBX domain-containing protein 7 (UBXN7).